The sequence spans 134 residues: Small ribosomal subunit protein uS11 (134 aa).

Belongs to the universal ribosomal protein uS11 family. As to quaternary structure, component of the small ribosomal subunit.

The protein localises to the cytoplasm. The protein is Small ribosomal subunit protein uS11 (RPS14) of Encephalitozoon cuniculi (strain GB-M1) (Microsporidian parasite).